Consider the following 259-residue polypeptide: Archaerhodopsin-2 (259 aa).

A propeptide spanning residues 1-6 (MDPIAL) is cleaved from the precursor. Gln7 is modified (pyrrolidone carboxylic acid). Topologically, residues 7 to 18 (QAGFDLLNDGRP) are extracellular. A helical membrane pass occupies residues 19 to 40 (ETLWLGIGTLLMLIGTFYFIAR). The Cytoplasmic portion of the chain corresponds to 41–49 (GWGVTDKEA). The helical transmembrane segment at 50–71 (REYYAITILVPGIASAAYLAMF) threads the bilayer. The Extracellular portion of the chain corresponds to 72–90 (FGIGVTEVELASGTVLDIY). A helical membrane pass occupies residues 91 to 112 (YARYADWLFTTPLLLLDLALLA). Over 113–115 (KVD) the chain is Cytoplasmic. Residues 116-138 (RVTIGTLIGVDALMIVTGLIGAL) traverse the membrane as a helical segment. Residues 139-142 (SKTP) are Extracellular-facing. The helical transmembrane segment at 143-171 (LARYTWWLFSTIAFLFVLYYLLTSLRSAA) threads the bilayer. At 172 to 174 (AKR) the chain is on the cytoplasmic side. Residues 175-203 (SEEVRSTFNTLTALVAVLWTAYPILWIVG) form a helical membrane-spanning segment. Residues 204–211 (TEGAGVVG) are Extracellular-facing. The chain crosses the membrane as a helical span at residues 212 to 244 (LGIETLAFMVLDVTAKVGFGFVLLRSRAILGET). The residue at position 227 (Lys227) is an N6-(retinylidene)lysine. At 245-259 (EAPEPSAGADASAAD) the chain is on the cytoplasmic side.

The protein belongs to the archaeal/bacterial/fungal opsin family.

The protein localises to the cell membrane. Light-driven proton pump. It may interact with bacterioruberin in the claret membrane. This chain is Archaerhodopsin-2, found in Halobacterium sp. (strain aus-2).